A 241-amino-acid polypeptide reads, in one-letter code: Phosphoribosylaminoimidazole-succinocarboxamide synthase (241 aa).

It belongs to the SAICAR synthetase family.

It catalyses the reaction 5-amino-1-(5-phospho-D-ribosyl)imidazole-4-carboxylate + L-aspartate + ATP = (2S)-2-[5-amino-1-(5-phospho-beta-D-ribosyl)imidazole-4-carboxamido]succinate + ADP + phosphate + 2 H(+). The protein operates within purine metabolism; IMP biosynthesis via de novo pathway; 5-amino-1-(5-phospho-D-ribosyl)imidazole-4-carboxamide from 5-amino-1-(5-phospho-D-ribosyl)imidazole-4-carboxylate: step 1/2. The polypeptide is Phosphoribosylaminoimidazole-succinocarboxamide synthase (Caldivirga maquilingensis (strain ATCC 700844 / DSM 13496 / JCM 10307 / IC-167)).